A 340-amino-acid chain; its full sequence is HTH-type transcriptional regulator PtxS (340 aa).

One can recognise an HTH lacI-type domain in the interval 12 to 67 (VTINQVAEAAGVSKASVSRYIGGDRQLLADATARRIERAIDQLDYRPNQMARGLKR). Positions 14-33 (INQVAEAAGVSKASVSRYIG) form a DNA-binding region, H-T-H motif.

Interacts with PtxR in the absence of 2-ketogluconate. Binding of the 2-ketogluconate effector to PtxS causes PtxS/PtxR complex dissociation.

Its activity is regulated as follows. 2-ketogluconate acts as a molecular effector and causes dissociation of the PtxS/PtxR complex. In terms of biological role, negatively regulates glucose metabolism by binding directly to the promoter region of the kgu and gad operons. It also negatively regulates its own synthesis. Its function is as follows. In addition, in pathogenic strains, PtxS modulates PtxR activity in response to 2-ketogluconate. In the presence of PtxR, which also binds to the kgu and gad promoter regions, PtxS and PtxR form a tight complex, creating a DNA-loop that prevents RNA polymerase promoter access and expression of the glucose metabolism genes. Binding of the 2-ketogluconate effector to PtxS causes PtxS/PtxR complex dissociation and leads to the dissolution of the repression DNA-loop, facilitating the entry of the RNA polymerase and enabling the transcription of the genes. Also plays an important role in the regulation of the expression of the virulence factor exotoxin A (toxA). PtxS does not bind directly to the toxA promoter but negatively regulates the production of exotoxin A by binding to PtxR and interfering with its positive regulator activity. In the presence of 2-ketogluconate, PtxS is released and PtxR can recruit RNA polymerase. The protein is HTH-type transcriptional regulator PtxS of Pseudomonas aeruginosa (strain ATCC 15692 / DSM 22644 / CIP 104116 / JCM 14847 / LMG 12228 / 1C / PRS 101 / PAO1).